Reading from the N-terminus, the 115-residue chain is SPbeta prophage-derived uncharacterized protein YoqS (115 aa).

The protein is SPbeta prophage-derived uncharacterized protein YoqS (yoqS) of Bacillus subtilis (strain 168).